Consider the following 374-residue polypeptide: RNA binding protein fox-1 homolog 3 (374 aa).

The span at 1–29 (MAQPYPPAQYPPPPQNGIPAEYAPPPPHP) shows a compositional bias: pro residues. The disordered stretch occupies residues 1 to 105 (MAQPYPPAQY…QQPKRLHVSN (105 aa)). Residues 49–74 (TPAQTHPEQPGTEASTQPIAGTQTVP) are compositionally biased toward polar residues. An RRM domain is found at 99-175 (KRLHVSNIPF…RKIEVNNATA (77 aa)). Position 223 is an asymmetric dimethylarginine; alternate (Arg-223). An Omega-N-methylarginine; alternate modification is found at Arg-223. The residue at position 319 (Arg-319) is an Asymmetric dimethylarginine.

Phosphorylated. As to expression, widely expressed in brain, including in cerebral cortex, hippocampus, thalamus, caudate/putamen, cerebellum, as well as in the spinal cord (at protein level). Not expressed in all neuronal cells within a region, in cerebellum, expression is absent in Purkinje cells (at protein level). Expressed in the retina in the ganglion cells and some cells in the inner nuclear layer, but absent from the photoreceptor cells and most cells in the inner nuclear layer (at protein level).

The protein resides in the nucleus. The protein localises to the cytoplasm. Functionally, pre-mRNA alternative splicing regulator. Regulates alternative splicing of RBFOX2 to enhance the production of mRNA species that are targeted for nonsense-mediated decay (NMD). The sequence is that of RNA binding protein fox-1 homolog 3 (Rbfox3) from Mus musculus (Mouse).